We begin with the raw amino-acid sequence, 142 residues long: Large ribosomal subunit protein bL21 (142 aa).

Residues Arg-74–Gly-84 show a composition bias toward basic residues. The segment at Arg-74–Glu-142 is disordered. The span at Lys-107–Lys-125 shows a compositional bias: basic and acidic residues. Positions Pro-126–Ala-135 are enriched in basic residues.

It belongs to the bacterial ribosomal protein bL21 family. Part of the 50S ribosomal subunit. Contacts protein L20.

In terms of biological role, this protein binds to 23S rRNA in the presence of protein L20. In Brucella melitensis biotype 2 (strain ATCC 23457), this protein is Large ribosomal subunit protein bL21.